Here is a 442-residue protein sequence, read N- to C-terminus: tRNA-2-methylthio-N(6)-dimethylallyladenosine synthase (442 aa).

In terms of domain architecture, MTTase N-terminal spans 2–120 (KKVFIRTFGC…LPKMIVDKET (119 aa)). Positions 11, 49, 83, 157, 161, and 164 each coordinate [4Fe-4S] cluster. A Radical SAM core domain is found at 143–375 (RVEGGAAFVS…NEVIEAETAR (233 aa)). One can recognise a TRAM domain in the interval 378–441 (QTMIGTVQRC…TFSLRGKVVE (64 aa)).

Belongs to the methylthiotransferase family. MiaB subfamily. As to quaternary structure, monomer. [4Fe-4S] cluster serves as cofactor.

It localises to the cytoplasm. It catalyses the reaction N(6)-dimethylallyladenosine(37) in tRNA + (sulfur carrier)-SH + AH2 + 2 S-adenosyl-L-methionine = 2-methylsulfanyl-N(6)-dimethylallyladenosine(37) in tRNA + (sulfur carrier)-H + 5'-deoxyadenosine + L-methionine + A + S-adenosyl-L-homocysteine + 2 H(+). Its function is as follows. Catalyzes the methylthiolation of N6-(dimethylallyl)adenosine (i(6)A), leading to the formation of 2-methylthio-N6-(dimethylallyl)adenosine (ms(2)i(6)A) at position 37 in tRNAs that read codons beginning with uridine. This is tRNA-2-methylthio-N(6)-dimethylallyladenosine synthase from Neisseria meningitidis serogroup C / serotype 2a (strain ATCC 700532 / DSM 15464 / FAM18).